Consider the following 130-residue polypeptide: Large-conductance mechanosensitive channel (130 aa).

The Cytoplasmic portion of the chain corresponds to 1 to 14 (MWNEFKAFAMRGNI). A helical transmembrane segment spans residues 15–43 (VDLAIGVVIGGAFGKIVTSLVNDIIMPLV). The Extracellular segment spans residues 44–65 (GLLLGGLDFSGLSFTFGDAVVK). A helical transmembrane segment spans residues 66-85 (YGSFIQTIVNFLIISFSIFI). Topologically, residues 86–130 (VIRTLNGLRRKKEAEEEAAEEAVDAQEELLKEIRDLLKQQAKSPE) are cytoplasmic.

It belongs to the MscL family. Homopentamer.

The protein resides in the cell membrane. In terms of biological role, channel that opens in response to stretch forces in the membrane lipid bilayer. Forms a nonselective ion channel with a conductance of about 4 nanosiemens. May participate in the regulation of osmotic pressure changes within the cell. This Bacillus subtilis (strain 168) protein is Large-conductance mechanosensitive channel.